The primary structure comprises 1476 residues: ABC transporter G family member 17 (1476 aa).

Disordered regions lie at residues 13-45 (SENN…YDYD) and 68-91 (FREI…KPEN). The stretch at 14–67 (ENNNNNNNNNNNNNNNNNNNLNNNNDNDYDYDSINNIEEKFENVSKELEGQSIK) forms a coiled coil. Low complexity predominate over residues 15–39 (NNNNNNNNNNNNNNNNNNNLNNNND). One can recognise an ABC transporter 1 domain in the interval 151-402 (LNPFNYFKKD…FLDLGFDCEP (252 aa)). An ABC transmembrane type-2 1 domain is found at 507-751 (WGDKFTLTSR…SLSVKGENYL (245 aa)). 5 helical membrane passes run 517–537 (FLTI…QPLT), 547–567 (AIFT…HGAL), 592–612 (ILID…IVYF), 623–643 (FFIF…LFRG), and 764–784 (LNVV…LFAV). One can recognise an ABC transporter 2 domain in the interval 838 to 1082 (FSWKSISYTV…LTSYFERHGV (245 aa)). Position 874-881 (874-881 (GSSGAGKT)) interacts with ATP. 6 consecutive transmembrane segments (helical) span residues 1182–1202 (FYTM…GFTF), 1219–1239 (SWEA…MFFI), 1260–1280 (LSMI…FFIA), 1298–1318 (WLMH…LGAA), 1322–1342 (IAIS…LCGV), and 1450–1470 (FGII…FVYL). An ABC transmembrane type-2 2 domain is found at 1182-1405 (FYTMGSFAQS…TDCQTYSAPF (224 aa)).

Belongs to the ABC transporter superfamily. ABCG family. PDR (TC 3.A.1.205) subfamily.

The protein resides in the membrane. This is ABC transporter G family member 17 (abcG17-1) from Dictyostelium discoideum (Social amoeba).